The chain runs to 267 residues: Hydroxyethylthiazole kinase (267 aa).

Residue Met46 coordinates substrate. Positions 122 and 168 each coordinate ATP. Residue Gly195 participates in substrate binding.

This sequence belongs to the Thz kinase family. The cofactor is Mg(2+).

The enzyme catalyses 5-(2-hydroxyethyl)-4-methylthiazole + ATP = 4-methyl-5-(2-phosphooxyethyl)-thiazole + ADP + H(+). The protein operates within cofactor biosynthesis; thiamine diphosphate biosynthesis; 4-methyl-5-(2-phosphoethyl)-thiazole from 5-(2-hydroxyethyl)-4-methylthiazole: step 1/1. Its function is as follows. Catalyzes the phosphorylation of the hydroxyl group of 4-methyl-5-beta-hydroxyethylthiazole (THZ). The polypeptide is Hydroxyethylthiazole kinase (Nitratidesulfovibrio vulgaris (strain DSM 19637 / Miyazaki F) (Desulfovibrio vulgaris)).